A 369-amino-acid polypeptide reads, in one-letter code: 4-hydroxy-3-methylbut-2-en-1-yl diphosphate synthase (flavodoxin) (369 aa).

[4Fe-4S] cluster contacts are provided by C270, C273, C305, and E312.

The protein belongs to the IspG family. [4Fe-4S] cluster is required as a cofactor.

The catalysed reaction is (2E)-4-hydroxy-3-methylbut-2-enyl diphosphate + oxidized [flavodoxin] + H2O + 2 H(+) = 2-C-methyl-D-erythritol 2,4-cyclic diphosphate + reduced [flavodoxin]. It participates in isoprenoid biosynthesis; isopentenyl diphosphate biosynthesis via DXP pathway; isopentenyl diphosphate from 1-deoxy-D-xylulose 5-phosphate: step 5/6. Functionally, converts 2C-methyl-D-erythritol 2,4-cyclodiphosphate (ME-2,4cPP) into 1-hydroxy-2-methyl-2-(E)-butenyl 4-diphosphate. In Pseudomonas fluorescens (strain SBW25), this protein is 4-hydroxy-3-methylbut-2-en-1-yl diphosphate synthase (flavodoxin).